The sequence spans 450 residues: UDP-N-acetylmuramoylalanine--D-glutamate ligase (450 aa).

119 to 125 (GSNGKTT) serves as a coordination point for ATP.

The protein belongs to the MurCDEF family.

Its subcellular location is the cytoplasm. The enzyme catalyses UDP-N-acetyl-alpha-D-muramoyl-L-alanine + D-glutamate + ATP = UDP-N-acetyl-alpha-D-muramoyl-L-alanyl-D-glutamate + ADP + phosphate + H(+). It functions in the pathway cell wall biogenesis; peptidoglycan biosynthesis. In terms of biological role, cell wall formation. Catalyzes the addition of glutamate to the nucleotide precursor UDP-N-acetylmuramoyl-L-alanine (UMA). The chain is UDP-N-acetylmuramoylalanine--D-glutamate ligase from Streptococcus pneumoniae (strain JJA).